Reading from the N-terminus, the 204-residue chain is Holliday junction branch migration complex subunit RuvA (204 aa).

Residues 1-65 (MIGRLRGAVA…SAGLRLYGFG (65 aa)) are domain I. Residues 66–142 (TREDRRAFVL…PITDGPVLMT (77 aa)) are domain II. A flexible linker region spans residues 143–152 (APGAVAAAPA). A domain III region spans residues 152-204 (AKAAPTGDAVAALMGLGVAEVNARRVVEAAAAKLGDEATVQALIKAGLQELGR).

The protein belongs to the RuvA family. In terms of assembly, homotetramer. Forms an RuvA(8)-RuvB(12)-Holliday junction (HJ) complex. HJ DNA is sandwiched between 2 RuvA tetramers; dsDNA enters through RuvA and exits via RuvB. An RuvB hexamer assembles on each DNA strand where it exits the tetramer. Each RuvB hexamer is contacted by two RuvA subunits (via domain III) on 2 adjacent RuvB subunits; this complex drives branch migration. In the full resolvosome a probable DNA-RuvA(4)-RuvB(12)-RuvC(2) complex forms which resolves the HJ.

The protein resides in the cytoplasm. Functionally, the RuvA-RuvB-RuvC complex processes Holliday junction (HJ) DNA during genetic recombination and DNA repair, while the RuvA-RuvB complex plays an important role in the rescue of blocked DNA replication forks via replication fork reversal (RFR). RuvA specifically binds to HJ cruciform DNA, conferring on it an open structure. The RuvB hexamer acts as an ATP-dependent pump, pulling dsDNA into and through the RuvAB complex. HJ branch migration allows RuvC to scan DNA until it finds its consensus sequence, where it cleaves and resolves the cruciform DNA. This Caulobacter sp. (strain K31) protein is Holliday junction branch migration complex subunit RuvA.